A 447-amino-acid chain; its full sequence is N-succinylarginine dihydrolase (447 aa).

Substrate-binding positions include 19 to 28 (AGLSFGNEAS), Asn110, and 137 to 138 (HR). Glu174 is a catalytic residue. Arg212 lines the substrate pocket. His248 is an active-site residue. Substrate contacts are provided by Asp250 and Asn359. The active-site Nucleophile is Cys365.

This sequence belongs to the succinylarginine dihydrolase family. Homodimer.

It catalyses the reaction N(2)-succinyl-L-arginine + 2 H2O + 2 H(+) = N(2)-succinyl-L-ornithine + 2 NH4(+) + CO2. The protein operates within amino-acid degradation; L-arginine degradation via AST pathway; L-glutamate and succinate from L-arginine: step 2/5. Catalyzes the hydrolysis of N(2)-succinylarginine into N(2)-succinylornithine, ammonia and CO(2). This is N-succinylarginine dihydrolase from Citrobacter koseri (strain ATCC BAA-895 / CDC 4225-83 / SGSC4696).